A 344-amino-acid chain; its full sequence is Aspartate-semialdehyde dehydrogenase (344 aa).

NADP(+) contacts are provided by residues 10-13 and 38-39; these read TGQV and RS. Arg101 lines the phosphate pocket. Cys131 acts as the Acyl-thioester intermediate in catalysis. Substrate is bound at residue Gln158. 161–162 provides a ligand contact to NADP(+); it reads SG. Lys228 contacts phosphate. Arg250 is a substrate binding site. His257 acts as the Proton acceptor in catalysis. Asn326 is a binding site for NADP(+).

Belongs to the aspartate-semialdehyde dehydrogenase family. As to quaternary structure, homodimer.

It carries out the reaction L-aspartate 4-semialdehyde + phosphate + NADP(+) = 4-phospho-L-aspartate + NADPH + H(+). Its pathway is amino-acid biosynthesis; L-lysine biosynthesis via DAP pathway; (S)-tetrahydrodipicolinate from L-aspartate: step 2/4. The protein operates within amino-acid biosynthesis; L-methionine biosynthesis via de novo pathway; L-homoserine from L-aspartate: step 2/3. It functions in the pathway amino-acid biosynthesis; L-threonine biosynthesis; L-threonine from L-aspartate: step 2/5. In terms of biological role, catalyzes the NADPH-dependent formation of L-aspartate-semialdehyde (L-ASA) by the reductive dephosphorylation of L-aspartyl-4-phosphate. This Corynebacterium melassecola protein is Aspartate-semialdehyde dehydrogenase.